The sequence spans 312 residues: Taste receptor type 2 member 62 (312 aa).

Over 1-4 (MPSL) the chain is Extracellular. Residues 5 to 27 (PTLIFIAIFCLESLAAMLQNGFL) form a helical membrane-spanning segment. At 28–39 (VTMLGREWVRCR) the chain is on the cytoplasmic side. A helical membrane pass occupies residues 40 to 62 (MLSTSDMIVACLAASRFCLHGVA). Residues 63–81 (MANNLLASLDFSRAVPYMN) lie on the Extracellular side of the membrane. A helical transmembrane segment spans residues 82–104 (IFWDLFNALTLWFTALLAAFYCV). Residues 105–127 (KISSFSHPTFAWLKWRISRLVPK) lie on the Cytoplasmic side of the membrane. Residues 128–150 (LIKGSLIICGLEVISSATGNILF) form a helical membrane-spanning segment. Residues 151–182 (GQRKVSLSSYRNETLVYRVQASFQLYFFLYDG) are Extracellular-facing. A glycan (N-linked (GlcNAc...) asparagine) is linked at N162. Residues 183–205 (FVWSIPFLLFLVSTVLLIVSLCW) form a helical membrane-spanning segment. At 206 to 231 (QLGQMRDLRPGPCDPSTQAYTMALKS) the chain is on the cytoplasmic side. A helical membrane pass occupies residues 232–254 (LTFSLIFCTLYFLSLFASALKII). Over 255–258 (NFQN) the chain is Extracellular. Residues 259–281 (HWHWAWEVLIYANICLHSTVLVL) traverse the membrane as a helical segment. The Cytoplasmic portion of the chain corresponds to 282–312 (RSPKLKKGLKTWPQLQCPCDAGSQGFGRCWP).

The protein belongs to the G-protein coupled receptor T2R family.

Its subcellular location is the membrane. Functionally, receptor that may play a role in the perception of bitterness and is gustducin-linked. May play a role in sensing the chemical composition of the gastrointestinal content. The activity of this receptor may stimulate alpha gustducin, mediate PLC-beta-2 activation and lead to the gating of TRPM5. The sequence is that of Taste receptor type 2 member 62 (TAS2R62) from Pan paniscus (Pygmy chimpanzee).